The primary structure comprises 949 residues: MTETPIAPLDDTPRFRYTAVLAGEIERAWQQQWADSGTFHVDNPVGSLAPADGSAVPADKMFVQDMFPYPSGEGLHVGHPLGYIATDVYARYYRMTGRNVLHALGFDAFGLPAEQYAIQTGTHPRTRTEANIVNFRRQLGRLGLGHDSRRSFATTDVDYYKWTQWIFLQIFNAWFDTDQNRARPIRELIAEFEAGTRQVGDGRSWADLDAGARADLVDAHRLVYLADSVVNWCPGLGTVLANEEVTADGRSERGNFPVFRKRLRQWMMRITAYSDRLLEDLDVLDWPDKVKTMQRNWIGRSTGAEVQFSTAAGDIEVFTTRPDTLFGATYMVLAPEHDLVDRLVASAWPDGTDARWTFGAATPAEAVAAYRAGIAAKSDLERQENKTKTGVFLGAYATNPANGQQVPVFIADYVLAGYGTGAIMAVPSGDQRDWDFATEFGLPIVEVVAGGDVTVEAYSGDGTMVNSGFLDGMDVATAKQAMTERLVADGRGRARVEYKLRDWLFARQRYWGEPFPVVYDSEGRAHGLPEGMLPVELPDVPDYSPVSFDPDDAGSEPSPPLGKVTDWVNVDLDLGDGLKPYTRDTNVMPQWAGSSWYELRYTDPYNSEALCAKENEAYWMGPRPAEHGPDDPGGVDLYVGGVEHAVLHLLYSRFWHKVLYDLGHVSSREPYRRLVNQGYIQAFAYTDSRGSYVPAAEVIERDGKFVWPGPDGETEVNQEFGKIGKSLKNSVSPDEICDNYGADTLRVYEMSMGPLEASRPWATKDVVGAYRFLQRVWRLVVDENTGETLATEDALDDDTLRLLHRTIAGTADDYASLRNNTAAAKLIEYTNHLTKQSVTARAALEPLVLMVAPLAPHLAEELWKRLGHEGSLAHGPFPLADERYLVEDTVEYPVQVNGKVRGRVTVPADAPADAVEAAALAEEKVVAFLDGRTPKKVIVVAGRLVNVVV.

A 'HIGH' region motif is present at residues 68 to 79 (PYPSGEGLHVGH). A disordered region spans residues 540-562 (VPDYSPVSFDPDDAGSEPSPPLG). The 'KMSKS' region signature appears at 722-726 (KIGKS). Lysine 725 serves as a coordination point for ATP.

This sequence belongs to the class-I aminoacyl-tRNA synthetase family.

The protein localises to the cytoplasm. It carries out the reaction tRNA(Leu) + L-leucine + ATP = L-leucyl-tRNA(Leu) + AMP + diphosphate. The protein is Leucine--tRNA ligase of Mycolicibacterium gilvum (strain PYR-GCK) (Mycobacterium gilvum (strain PYR-GCK)).